Reading from the N-terminus, the 355-residue chain is Protein RecA (355 aa).

An ATP-binding site is contributed by 66–73 (GPESSGKT). The segment at 331-355 (DVPEEDLPTTEDEQINILPDDSTEE) is disordered. A compositionally biased stretch (acidic residues) spans 332–344 (VPEEDLPTTEDEQ).

Belongs to the RecA family.

The protein localises to the cytoplasm. Can catalyze the hydrolysis of ATP in the presence of single-stranded DNA, the ATP-dependent uptake of single-stranded DNA by duplex DNA, and the ATP-dependent hybridization of homologous single-stranded DNAs. It interacts with LexA causing its activation and leading to its autocatalytic cleavage. The chain is Protein RecA from Latilactobacillus sakei subsp. sakei (strain 23K) (Lactobacillus sakei subsp. sakei).